The chain runs to 132 residues: Small ribosomal subunit protein uS8 (132 aa).

This sequence belongs to the universal ribosomal protein uS8 family. In terms of assembly, part of the 30S ribosomal subunit. Contacts proteins S5 and S12.

Its function is as follows. One of the primary rRNA binding proteins, it binds directly to 16S rRNA central domain where it helps coordinate assembly of the platform of the 30S subunit. The polypeptide is Small ribosomal subunit protein uS8 (Geobacter metallireducens (strain ATCC 53774 / DSM 7210 / GS-15)).